The primary structure comprises 201 residues: Syndecan-2 (201 aa).

The signal sequence occupies residues 1-18 (MRRAWILLTLGLVACVSA). Topologically, residues 19–144 (ESRAELTSDK…HSDSLFKRTE (126 aa)) are extracellular. O-linked (Xyl...) (glycosaminoglycan) serine glycans are attached at residues S41, S55, and S57. Disordered regions lie at residues 42–70 (GVYP…ELTT) and 90–130 (TLNI…DTNV). Residues 90 to 102 (TLNIQNKIPAQTK) are compositionally biased toward polar residues. A glycan (O-linked (GalNAc...) threonine) is linked at T101. Over residues 103–123 (SPEETDKEKVHLSDSERKMDP) the composition is skewed to basic and acidic residues. S115 carries the phosphoserine; by FAM20C modification. Residues 145–169 (VLAAVIAGGVIGFLFAIFLILLLVY) form a helical membrane-spanning segment. The Cytoplasmic segment spans residues 170-201 (RMRKKDEGSYDLGERKPSSAAYQKAPTKEFYA). The interval 178 to 201 (SYDLGERKPSSAAYQKAPTKEFYA) is disordered. S187 bears the Phosphoserine mark.

This sequence belongs to the syndecan proteoglycan family. As to quaternary structure, interacts (via cytoplasmic domain) with SARM1. Forms a complex with SDCBP and PDCD6IP. O-glycosylated with core 1 or possibly core 8 glycans. Contains heparan sulfate. Also contains chondroitin sulfate.

The protein resides in the membrane. In terms of biological role, cell surface proteoglycan which regulates dendritic arbor morphogenesis. In Homo sapiens (Human), this protein is Syndecan-2 (SDC2).